The following is a 1025-amino-acid chain: DNA ligase 4 (1025 aa).

The segment at 1-36 (MMQPTPAPSSAPGSPQRTQAEPEMETPSYPQPPQNV) is disordered. Positions 289, 291, 292, 296, 349, 387, 447, 452, 469, and 471 each coordinate ATP. Lysine 291 acts as the N6-AMP-lysine intermediate in catalysis. Position 349 (glutamate 349) interacts with Mg(2+). A Mg(2+)-binding site is contributed by glutamate 447. The BRCT 1 domain occupies 667-763 (VKTDIFNGMK…EPAPFKKKYF (97 aa)). Residues 773 to 904 (ADEYNEDDGE…TTPDVDGDVK (132 aa)) are disordered. Acidic residues-rich tracts occupy residues 775–785 (EYNEDDGEEEG) and 806–816 (SETEDEDEEQA). Basic and acidic residues predominate over residues 817 to 838 (PEIKEEQDGELHEWLKVDDRKS). The span at 845 to 870 (DEEDSVTEDDSDNADVADEEEPDLDD) shows a compositional bias: acidic residues. The segment covering 891-904 (RHRETTPDVDGDVK) has biased composition (basic and acidic residues). The 111-residue stretch at 915–1025 (DPDVIFKHLC…TLLDEEEFAP (111 aa)) folds into the BRCT 2 domain.

This sequence belongs to the ATP-dependent DNA ligase family. Requires Mg(2+) as cofactor.

The protein resides in the nucleus. It catalyses the reaction ATP + (deoxyribonucleotide)n-3'-hydroxyl + 5'-phospho-(deoxyribonucleotide)m = (deoxyribonucleotide)n+m + AMP + diphosphate.. Its function is as follows. DNA ligase involved in DNA non-homologous end joining (NHEJ); required for double-strand break (DSB) repair. The polypeptide is DNA ligase 4 (LIG4) (Coprinopsis cinerea (Inky cap fungus)).